The primary structure comprises 161 residues: Large ribosomal subunit protein uL15 (161 aa).

Residues 1 to 42 (MKLSDIADNAGSRKKRMRVGRGIGSGKGKQSGRGGKGQTARS) are disordered. Residues 21–37 (RGIGSGKGKQSGRGGKG) are compositionally biased toward gly residues.

The protein belongs to the universal ribosomal protein uL15 family. Part of the 50S ribosomal subunit.

In terms of biological role, binds to the 23S rRNA. The sequence is that of Large ribosomal subunit protein uL15 from Bradyrhizobium diazoefficiens (strain JCM 10833 / BCRC 13528 / IAM 13628 / NBRC 14792 / USDA 110).